We begin with the raw amino-acid sequence, 393 residues long: S-adenosylmethionine synthase 2 (393 aa).

Position 9 (E9) interacts with Mg(2+). Residue H15 participates in ATP binding. E43 serves as a coordination point for K(+). Positions 56 and 99 each coordinate L-methionine. ATP-binding positions include 167-169 (DGK), 235-238 (SGRF), D246, 252-253 (RK), A269, K273, and K277. D246 contributes to the L-methionine binding site. Position 277 (K277) interacts with L-methionine.

The protein belongs to the AdoMet synthase family. In terms of assembly, homotetramer. Requires Mn(2+) as cofactor. The cofactor is Mg(2+). Co(2+) serves as cofactor. It depends on K(+) as a cofactor.

It localises to the cytoplasm. The enzyme catalyses L-methionine + ATP + H2O = S-adenosyl-L-methionine + phosphate + diphosphate. The protein operates within amino-acid biosynthesis; S-adenosyl-L-methionine biosynthesis; S-adenosyl-L-methionine from L-methionine: step 1/1. Functionally, catalyzes the formation of S-adenosylmethionine from methionine and ATP. The reaction comprises two steps that are both catalyzed by the same enzyme: formation of S-adenosylmethionine (AdoMet) and triphosphate, and subsequent hydrolysis of the triphosphate. The polypeptide is S-adenosylmethionine synthase 2 (METK2) (Populus trichocarpa (Western balsam poplar)).